Here is a 178-residue protein sequence, read N- to C-terminus: Large ribosomal subunit protein bL25 (178 aa).

It belongs to the bacterial ribosomal protein bL25 family. CTC subfamily. In terms of assembly, part of the 50S ribosomal subunit; part of the 5S rRNA/L5/L18/L25 subcomplex. Contacts the 5S rRNA. Binds to the 5S rRNA independently of L5 and L18.

In terms of biological role, this is one of the proteins that binds to the 5S RNA in the ribosome where it forms part of the central protuberance. The chain is Large ribosomal subunit protein bL25 from Helicobacter pylori (strain J99 / ATCC 700824) (Campylobacter pylori J99).